The primary structure comprises 263 residues: Cytochrome c oxidase subunit 3 (263 aa).

Helical transmembrane passes span 7–27, 44–64, 78–98, 120–140, 145–165, 191–211, and 241–261; these read ITVLINIFFIFSNYNNIKAHL, FSVGILFTSNPIIFIIFVYSI, GMLSIIISEAILFITYFWGIL, LILTITFILASASCMTACLQF, GMSLEISSIVFIIYLLGECFA, VTGLHFSHVIVGLLLLLIYFI, and ITILYWHFVEIVWLFIEYFFY.

The protein belongs to the cytochrome c oxidase subunit 3 family. As to quaternary structure, component of the cytochrome c oxidase (complex IV, CIV), a multisubunit enzyme composed of a catalytic core of 3 subunits and several supernumerary subunits. The complex exists as a monomer or a dimer and forms supercomplexes (SCs) in the inner mitochondrial membrane with ubiquinol-cytochrome c oxidoreductase (cytochrome b-c1 complex, complex III, CIII).

The protein localises to the mitochondrion inner membrane. It catalyses the reaction 4 Fe(II)-[cytochrome c] + O2 + 8 H(+)(in) = 4 Fe(III)-[cytochrome c] + 2 H2O + 4 H(+)(out). In terms of biological role, component of the cytochrome c oxidase, the last enzyme in the mitochondrial electron transport chain which drives oxidative phosphorylation. The respiratory chain contains 3 multisubunit complexes succinate dehydrogenase (complex II, CII), ubiquinol-cytochrome c oxidoreductase (cytochrome b-c1 complex, complex III, CIII) and cytochrome c oxidase (complex IV, CIV), that cooperate to transfer electrons derived from NADH and succinate to molecular oxygen, creating an electrochemical gradient over the inner membrane that drives transmembrane transport and the ATP synthase. Cytochrome c oxidase is the component of the respiratory chain that catalyzes the reduction of oxygen to water. Electrons originating from reduced cytochrome c in the intermembrane space (IMS) are transferred via the dinuclear copper A center (CU(A)) of subunit 2 and heme A of subunit 1 to the active site in subunit 1, a binuclear center (BNC) formed by heme A3 and copper B (CU(B)). The BNC reduces molecular oxygen to 2 water molecules using 4 electrons from cytochrome c in the IMS and 4 protons from the mitochondrial matrix. This Plasmodium vivax protein is Cytochrome c oxidase subunit 3 (COIII).